The primary structure comprises 494 residues: Glutamyl-tRNA reductase (494 aa).

Substrate-binding positions include 58–61 (TCNR), serine 118, 123–125 (EQQ), and glutamine 129. Cysteine 59 (nucleophile) is an active-site residue. Position 205-210 (205-210 (GAGAMA)) interacts with NADP(+). Residues 448–494 (KGANAGSGQRKKQKPQENRVSTARAVYRSTYQDLTQASTPGGKDDDQ) are disordered. Over residues 476-486 (STYQDLTQAST) the composition is skewed to polar residues.

The protein belongs to the glutamyl-tRNA reductase family. Homodimer.

The enzyme catalyses (S)-4-amino-5-oxopentanoate + tRNA(Glu) + NADP(+) = L-glutamyl-tRNA(Glu) + NADPH + H(+). It functions in the pathway porphyrin-containing compound metabolism; protoporphyrin-IX biosynthesis; 5-aminolevulinate from L-glutamyl-tRNA(Glu): step 1/2. Functionally, catalyzes the NADPH-dependent reduction of glutamyl-tRNA(Glu) to glutamate 1-semialdehyde (GSA). This Corynebacterium urealyticum (strain ATCC 43042 / DSM 7109) protein is Glutamyl-tRNA reductase.